Reading from the N-terminus, the 327-residue chain is Phenylalanine--tRNA ligase alpha subunit (327 aa).

E252 contacts Mg(2+).

This sequence belongs to the class-II aminoacyl-tRNA synthetase family. Phe-tRNA synthetase alpha subunit type 1 subfamily. Tetramer of two alpha and two beta subunits. Requires Mg(2+) as cofactor.

It is found in the cytoplasm. The catalysed reaction is tRNA(Phe) + L-phenylalanine + ATP = L-phenylalanyl-tRNA(Phe) + AMP + diphosphate + H(+). This Edwardsiella ictaluri (strain 93-146) protein is Phenylalanine--tRNA ligase alpha subunit.